A 162-amino-acid polypeptide reads, in one-letter code: Ribosome-binding factor A (162 aa).

Residues 123 to 162 (VARVAAGASPAGDPDPYKEPRVEDADDAEVDEPSRSRQAD) form a disordered region. Residues 125 to 136 (RVAAGASPAGDP) show a composition bias toward low complexity.

This sequence belongs to the RbfA family. As to quaternary structure, monomer. Binds 30S ribosomal subunits, but not 50S ribosomal subunits or 70S ribosomes.

Its subcellular location is the cytoplasm. One of several proteins that assist in the late maturation steps of the functional core of the 30S ribosomal subunit. Associates with free 30S ribosomal subunits (but not with 30S subunits that are part of 70S ribosomes or polysomes). Required for efficient processing of 16S rRNA. May interact with the 5'-terminal helix region of 16S rRNA. In Rhodococcus opacus (strain B4), this protein is Ribosome-binding factor A.